The following is a 128-amino-acid chain: Iron-sulfur cluster insertion protein ErpA 1 (128 aa).

Iron-sulfur cluster is bound by residues Cys-47, Cys-111, and Cys-113.

Belongs to the HesB/IscA family. As to quaternary structure, homodimer. It depends on iron-sulfur cluster as a cofactor.

In terms of biological role, required for insertion of 4Fe-4S clusters for at least IspG. The sequence is that of Iron-sulfur cluster insertion protein ErpA 1 from Methylococcus capsulatus (strain ATCC 33009 / NCIMB 11132 / Bath).